The primary structure comprises 259 residues: Thiazole synthase (259 aa).

Catalysis depends on K95, which acts as the Schiff-base intermediate with DXP. 1-deoxy-D-xylulose 5-phosphate is bound by residues G156, 183–184 (AG), and 205–206 (NS).

It belongs to the ThiG family. Homotetramer. Forms heterodimers with either ThiH or ThiS.

Its subcellular location is the cytoplasm. It carries out the reaction [ThiS sulfur-carrier protein]-C-terminal-Gly-aminoethanethioate + 2-iminoacetate + 1-deoxy-D-xylulose 5-phosphate = [ThiS sulfur-carrier protein]-C-terminal Gly-Gly + 2-[(2R,5Z)-2-carboxy-4-methylthiazol-5(2H)-ylidene]ethyl phosphate + 2 H2O + H(+). It functions in the pathway cofactor biosynthesis; thiamine diphosphate biosynthesis. Its function is as follows. Catalyzes the rearrangement of 1-deoxy-D-xylulose 5-phosphate (DXP) to produce the thiazole phosphate moiety of thiamine. Sulfur is provided by the thiocarboxylate moiety of the carrier protein ThiS. In vitro, sulfur can be provided by H(2)S. The sequence is that of Thiazole synthase from Coxiella burnetii (strain RSA 331 / Henzerling II).